The primary structure comprises 482 residues: Long chain base biosynthesis protein 1 (482 aa).

Residues 32–52 traverse the membrane as a helical segment; that stretch reads VPIRGHFFVEGLLGVVIIILL.

It belongs to the class-II pyridoxal-phosphate-dependent aminotransferase family. Heterodimer with LCB2 (LCB2a or LCB2b). Component of the serine palmitoyltransferase (SPT) complex, composed of LCB1 and LCB2 (LCB2a or LCB2b). Pyridoxal 5'-phosphate serves as cofactor. Ubiquitous.

The protein localises to the endoplasmic reticulum membrane. The catalysed reaction is L-serine + hexadecanoyl-CoA + H(+) = 3-oxosphinganine + CO2 + CoA. Its pathway is lipid metabolism; sphingolipid metabolism. In terms of biological role, component of serine palmitoyltransferase (SPT), which catalyzes the committed step in the synthesis of sphingolipids, the condensation of serine with palmitoyl CoA to form the long chain base 3-ketosphinganine. The heterodimer formed with LCB2 constitutes the catalytic core. Involved in the regulation of the programmed cell death (PCD) signaling pathway. Plays an important role during male gametogenesis and embryogenesis. The sequence is that of Long chain base biosynthesis protein 1 (LCB1) from Arabidopsis thaliana (Mouse-ear cress).